Reading from the N-terminus, the 463-residue chain is Asparagine--tRNA ligase (463 aa).

It belongs to the class-II aminoacyl-tRNA synthetase family. As to quaternary structure, homodimer.

Its subcellular location is the cytoplasm. The enzyme catalyses tRNA(Asn) + L-asparagine + ATP = L-asparaginyl-tRNA(Asn) + AMP + diphosphate + H(+). This Desulfitobacterium hafniense (strain Y51) protein is Asparagine--tRNA ligase.